The primary structure comprises 180 residues: Crossover junction endodeoxyribonuclease RuvC (180 aa).

Catalysis depends on residues Asp-7, Glu-66, and Asp-138. Positions 7, 66, and 138 each coordinate Mg(2+).

The protein belongs to the RuvC family. In terms of assembly, homodimer which binds Holliday junction (HJ) DNA. The HJ becomes 2-fold symmetrical on binding to RuvC with unstacked arms; it has a different conformation from HJ DNA in complex with RuvA. In the full resolvosome a probable DNA-RuvA(4)-RuvB(12)-RuvC(2) complex forms which resolves the HJ. It depends on Mg(2+) as a cofactor.

The protein resides in the cytoplasm. It catalyses the reaction Endonucleolytic cleavage at a junction such as a reciprocal single-stranded crossover between two homologous DNA duplexes (Holliday junction).. In terms of biological role, the RuvA-RuvB-RuvC complex processes Holliday junction (HJ) DNA during genetic recombination and DNA repair. Endonuclease that resolves HJ intermediates. Cleaves cruciform DNA by making single-stranded nicks across the HJ at symmetrical positions within the homologous arms, yielding a 5'-phosphate and a 3'-hydroxyl group; requires a central core of homology in the junction. The consensus cleavage sequence is 5'-(A/T)TT(C/G)-3'. Cleavage occurs on the 3'-side of the TT dinucleotide at the point of strand exchange. HJ branch migration catalyzed by RuvA-RuvB allows RuvC to scan DNA until it finds its consensus sequence, where it cleaves and resolves the cruciform DNA. This Burkholderia pseudomallei (strain 668) protein is Crossover junction endodeoxyribonuclease RuvC.